We begin with the raw amino-acid sequence, 926 residues long: Protein Niban 1 (926 aa).

Gly2 carries the N-myristoyl glycine lipid modification. Residues Ser578, Ser581, Ser595, Ser601, and Ser640 each carry the phosphoserine modification. Disordered stretches follow at residues 604–699 and 719–889; these read LPGA…VPGS and VEND…EQVN. A compositionally biased stretch (polar residues) spans 661-672; it reads VENTAGPLSSHL. Phosphoserine is present on Ser699. Over residues 733–745 the composition is skewed to basic and acidic residues; the sequence is NIKEEESKIHPEA. Ser755 is modified (phosphoserine). Residues 756 to 767 show a composition bias toward basic and acidic residues; sequence CEEREVREKEAQ. A compositionally biased stretch (low complexity) spans 784-797; the sequence is GRGSTSQSTSGGLT. The span at 840–854 shows a compositional bias: polar residues; sequence VTVTPQEDATLSSNP. Ser923 is subject to Phosphoserine.

Belongs to the Niban family.

The protein localises to the cytoplasm. It is found in the membrane. Its function is as follows. Regulates phosphorylation of a number of proteins involved in translation regulation including EIF2A, EIF4EBP1 and RPS6KB1. May be involved in the endoplasmic reticulum stress response. This is Protein Niban 1 from Mus musculus (Mouse).